Reading from the N-terminus, the 418-residue chain is Metal tolerance protein 1 (418 aa).

At 1–56 the chain is on the cytoplasmic side; sequence MDSHNSAPPQIAEVRMDISSSTSVAAGNKVCRGAACDFSDSSNSSKDARERMASMR. A helical membrane pass occupies residues 57–77; sequence KLIIAVILCIIFMAVEVVGGI. The Vacuolar segment spans residues 78-89; the sequence is KANSLAILTDAA. A helical transmembrane segment spans residues 90-110; that stretch reads HLLSDVAAFAISLFSLWAAGW. Topologically, residues 111–122 are cytoplasmic; that stretch reads EATPQQSYGFFR. The helical transmembrane segment at 123-143 threads the bilayer; sequence IEILGALVSIQLIWLLAGILV. Topologically, residues 144–160 are vacuolar; that stretch reads YEAIVRLINESGEVQGS. Residues 161–181 form a helical membrane-spanning segment; the sequence is LMFAVSAFGLFVNIIMAVLLG. The interval 182–246 is required for zinc-binding; sequence HDHGHGHGHG…HHPGTGHHHH (65 aa). Residues 182 to 282 lie on the Cytoplasmic side of the membrane; it reads HDHGHGHGHG…RRNINVHSAY (101 aa). Residues 186-248 form a disordered region; the sequence is HGHGHGHGHG…PGTGHHHHDA (63 aa). The span at 196 to 227 shows a compositional bias: basic and acidic residues; the sequence is HSHDHDHGGSDHDHHHHEDQEHGHVHHHEDGH. Positions 235–245 are enriched in basic residues; it reads LHHHPGTGHHH. A helical transmembrane segment spans residues 283 to 303; it reads LHVLGDSIQSIGVMIGGAIIW. At 304 to 307 the chain is on the vacuolar side; sequence YKPE. The chain crosses the membrane as a helical span at residues 308–328; that stretch reads WKIIDLICTLIFSVIVLFTTI. Residues 329–418 lie on the Cytoplasmic side of the membrane; that stretch reads KMLRNILEVL…SHVTIQIERE (90 aa).

It belongs to the cation diffusion facilitator (CDF) transporter (TC 2.A.4) family. SLC30A subfamily.

Its subcellular location is the vacuole membrane. Functionally, involved in sequestration of excess zinc in the cytoplasm into vacuoles to maintain zinc homeostasis. This Oryza sativa subsp. japonica (Rice) protein is Metal tolerance protein 1 (MTP1).